Here is a 459-residue protein sequence, read N- to C-terminus: MSFSWSAKDHKSYTNPPSNPTQGLKRPRNDTGNKVTVVLGAQWGDEGKGKVVDLLATESDLVCRCQGGNNAGHTVVVEGKEYDFHLLPSGIINPKSICVIGNGVVIHLPGLFEEAENNEKKGLKGWEKRLIVSDRAHLVFDFHQVVDGIQETQRQATEGKIIGTTKKGIGPTYASKASRIGLRVCDLLGDFKEFSTKFKNLVEQYQSMYSSLTVDTESQLKKLKEYGERLRPMVRDGVYYMYEALHGPPKKILVEGANAALLDIDFGTYPFVTSSNCTVGGACTGLGIPPLNIGEVYGVSKAYTTRVGIGAFPTEQLNATGELLQTRGHEVGVTTGRKRRCGWLDLVILRYAHMINGFTAIALTKLDILDVLDEIKVGMAYKINGKRIPHFPADMELLHKVEVEYETFPGWKSDTSAARKWNNLPQKAQNYIRFVESHIGVPIKWVGVGKSRECMIQMF.

Residues M1–T31 are disordered. Residues Y13–Q22 show a composition bias toward polar residues. Residues G44–K50 and G72–T74 contribute to the GTP site. The active-site Proton acceptor is D45. 2 residues coordinate Mg(2+): D45 and G72. D45 contributes to the substrate binding site. IMP is bound by residues D45–K48, N70–H73, T165, R179, N258, T273, and R337. H73 serves as the catalytic Proton donor. V333–R339 is a substrate binding site. GTP-binding positions include R339, K365 to D367, and G447 to K450.

Belongs to the adenylosuccinate synthetase family. In terms of assembly, homodimer. The cofactor is Mg(2+).

The protein localises to the cytoplasm. It carries out the reaction IMP + L-aspartate + GTP = N(6)-(1,2-dicarboxyethyl)-AMP + GDP + phosphate + 2 H(+). It participates in purine metabolism; AMP biosynthesis via de novo pathway; AMP from IMP: step 1/2. In terms of biological role, component of the purine nucleotide cycle (PNC), which interconverts IMP and AMP to regulate the nucleotide levels in various tissues, and which contributes to glycolysis and ammoniagenesis. Catalyzes the first committed step in the biosynthesis of AMP from IMP. The chain is Adenylosuccinate synthetase isozyme 1 C (adss1c) from Salmo salar (Atlantic salmon).